The sequence spans 52 residues: UPF0391 membrane protein ABAYE0050 (52 aa).

2 helical membrane passes run 6–26 (IIFA…VAGL) and 30–50 (FAVI…ISRG).

Belongs to the UPF0391 family.

The protein localises to the cell membrane. This chain is UPF0391 membrane protein ABAYE0050, found in Acinetobacter baumannii (strain AYE).